The primary structure comprises 226 residues: EEF1A lysine methyltransferase 3 (226 aa).

S-adenosyl-L-methionine-binding positions include tryptophan 57, 83–85 (GAG), aspartate 104, tryptophan 133, and alanine 150.

Belongs to the methyltransferase superfamily. METTL21 family. In terms of assembly, interacts with members of the heat shock protein 70 and 90 families and of the TCP-1 chaperonin family, as well as with HSPD1, STIP1 and tubulin; at least some of these proteins may be methylation substrates.

The protein resides in the cytoplasm. The protein localises to the cytoskeleton. Its subcellular location is the microtubule organizing center. It is found in the centrosome. The enzyme catalyses L-lysyl-[protein] + 3 S-adenosyl-L-methionine = N(6),N(6),N(6)-trimethyl-L-lysyl-[protein] + 3 S-adenosyl-L-homocysteine + 3 H(+). It carries out the reaction L-lysyl-[protein] + S-adenosyl-L-methionine = N(6)-methyl-L-lysyl-[protein] + S-adenosyl-L-homocysteine + H(+). The catalysed reaction is N(6)-methyl-L-lysyl-[protein] + S-adenosyl-L-methionine = N(6),N(6)-dimethyl-L-lysyl-[protein] + S-adenosyl-L-homocysteine + H(+). It catalyses the reaction N(6),N(6)-dimethyl-L-lysyl-[protein] + S-adenosyl-L-methionine = N(6),N(6),N(6)-trimethyl-L-lysyl-[protein] + S-adenosyl-L-homocysteine + H(+). Protein-lysine methyltransferase that selectively mono-, di- and trimethylates 'Lys-165' of the translation elongation factors EEF1A1 and EEF1A2 in an aminoacyl-tRNA and GTP-dependent manner. EEF1A1 methylation by EEF1AKMT3 is dynamic as well as inducible by stress conditions, such as ER-stress, and plays a regulatory role on mRNA translation. This is EEF1A lysine methyltransferase 3 from Homo sapiens (Human).